The chain runs to 961 residues: Mitogen-activated protein kinase kinase kinase 13-A (961 aa).

The interval 88–118 is disordered; the sequence is LRDQDEPENTAPQGSSHSGDGGSYSGNEDIR. A Protein kinase domain is found at 169–410; that stretch reads ISELQWLGSG…FRQILMHLDI (242 aa). ATP is bound by residues 175–183 and lysine 196; that span reads LGSGAQGAV. The Proton acceptor role is filled by aspartate 280. 2 leucine-zipper regions span residues 434 to 455 and 487 to 508; these read VKKHFEKIKSEGTCIHRLDEEL and LSAIMLQLEVREKELIRREQAV. The stretch at 458-497 forms a coiled coil; that stretch reads RRREELRHALDIREHYERKLERANNLYMELSAIMLQLEVR. 3 disordered regions span residues 513–600, 615–637, and 799–883; these read PGTY…SKGS, ALSQQSSQHQTLASPPVTSCSPY, and RRIR…KLDD. Residues 560-578 show a composition bias toward low complexity; it reads SAEGSAASASPISGSPKTS. Basic residues predominate over residues 584-596; that stretch reads NRYRSKPRHRRVN. A compositionally biased stretch (acidic residues) spans 810–823; it reads ESSEEEEGEVDSEV. Residues 811–824 are acidic; the sequence is SSEEEEGEVDSEVE. The span at 837–851 shows a compositional bias: polar residues; it reads KCQSYSTFSSENFSV.

This sequence belongs to the protein kinase superfamily. Ser/Thr protein kinase family.

The protein resides in the cytoplasm. Its subcellular location is the membrane. It carries out the reaction L-seryl-[protein] + ATP = O-phospho-L-seryl-[protein] + ADP + H(+). The catalysed reaction is L-threonyl-[protein] + ATP = O-phospho-L-threonyl-[protein] + ADP + H(+). Functionally, may have a role in the JNK signaling pathway. The chain is Mitogen-activated protein kinase kinase kinase 13-A (map3k13-a) from Xenopus laevis (African clawed frog).